Reading from the N-terminus, the 196-residue chain is Molybdenum cofactor guanylyltransferase (196 aa).

GTP-binding positions include 14 to 16 (LAG), lysine 27, aspartate 73, and aspartate 106. Aspartate 106 contacts Mg(2+).

This sequence belongs to the MobA family. In terms of assembly, monomer. Requires Mg(2+) as cofactor.

Its subcellular location is the cytoplasm. It carries out the reaction Mo-molybdopterin + GTP + H(+) = Mo-molybdopterin guanine dinucleotide + diphosphate. Transfers a GMP moiety from GTP to Mo-molybdopterin (Mo-MPT) cofactor (Moco or molybdenum cofactor) to form Mo-molybdopterin guanine dinucleotide (Mo-MGD) cofactor. The protein is Molybdenum cofactor guanylyltransferase of Acidiphilium cryptum (strain JF-5).